Consider the following 337-residue polypeptide: Inositol 2-dehydrogenase 1 (337 aa).

The protein belongs to the Gfo/Idh/MocA family. In terms of assembly, homotetramer.

It carries out the reaction myo-inositol + NAD(+) = scyllo-inosose + NADH + H(+). In terms of biological role, involved in the oxidation of myo-inositol (MI) to 2-keto-myo-inositol (2KMI or 2-inosose). The protein is Inositol 2-dehydrogenase 1 of Paenarthrobacter aurescens (strain TC1).